The primary structure comprises 339 residues: 2-keto-3-deoxygluconate permease (339 aa).

10 helical membrane-spanning segments follow: residues 10–30, 42–62, 77–97, 100–120, 141–161, 163–183, 199–219, 224–244, 254–274, and 289–309; these read IPGG…TFAP, GLIS…GASI, LVVT…RILP, GVEV…AMDM, AFVL…LGTA, IASF…VGFA, VQTL…LSVI, LLGV…LIVA, TAGI…VLIA, and TLVA…TAMW. Positions 315–339 are disordered; sequence GGDGTVPKEDAVEEKAEQQRRRIIK. Residues 320 to 339 are compositionally biased toward basic and acidic residues; that stretch reads VPKEDAVEEKAEQQRRRIIK.

This sequence belongs to the KdgT transporter family.

It is found in the cell inner membrane. It catalyses the reaction 2-dehydro-3-deoxy-D-gluconate(in) + H(+)(in) = 2-dehydro-3-deoxy-D-gluconate(out) + H(+)(out). With respect to regulation, uptake is inhibited by the protonophore uncouplers carbonyl cyanide m-chlorophenylhydrazone (CCCP) and 2,4-dinitrophenol, and by NaN(3). Its function is as follows. Catalyzes the proton-dependent uptake of 2-keto-3-deoxygluconate (KDG) into the cell. Can also mediate the uptake of glucuronate with a low affinity, and may mediate the uptake of 5-keto-4-deoxyuronate (DKI) and 2,5-diketo-3-deoxygluconate (DKII), which are intermediates in pectin degradation. This chain is 2-keto-3-deoxygluconate permease, found in Dickeya chrysanthemi (Pectobacterium chrysanthemi).